The primary structure comprises 118 residues: MVARTGSTNIMVRKLIDLLSKQKKPLWKRVAEELQKPSRQRPYINIYKINKYTKPNDVVVVPGKVLGIGNLDHPVTVVALSFSKSAKEKIEKSGGKVISLYKALEEVKDFKNVRLMKG.

It belongs to the eukaryotic ribosomal protein eL18 family.

This Sulfurisphaera tokodaii (strain DSM 16993 / JCM 10545 / NBRC 100140 / 7) (Sulfolobus tokodaii) protein is Large ribosomal subunit protein eL18.